The sequence spans 382 residues: Gap junction alpha-1 protein (382 aa).

Residues 2-23 are Cytoplasmic-facing; it reads GDWSALGKLLDKVQAYSTAGGK. Phosphoserine is present on serine 5. The helical transmembrane segment at 24–44 threads the bilayer; it reads VWLSVLFIFRILLLGTAVESA. The Extracellular segment spans residues 45-76; that stretch reads WGDEQSAFRCNTQQPGCENVCYDKSFPISHVR. 2 disulfides stabilise this stretch: cysteine 54-cysteine 192 and cysteine 187-cysteine 198. The helical transmembrane segment at 77-97 threads the bilayer; that stretch reads FWVLQIIFVSVPTLLYLAHVF. Topologically, residues 98-155 are cytoplasmic; that stretch reads YVMRKEEKLNKKEEELKVAQTDGVNVEMHLKQIEIKKFKYGIEEHGKVKMRGGLLRTY. A Glycyl lysine isopeptide (Lys-Gly) (interchain with G-Cter in SUMO) cross-link involves residue lysine 144. A helical membrane pass occupies residues 156-176; it reads IISILFKSIFEVAFLLIQWYI. Residues 177 to 207 are Extracellular-facing; sequence YGFSLSAVYTCKRDPCPHQVDCFLSRPTEKT. The chain crosses the membrane as a helical span at residues 208-228; the sequence is IFIIFMLVVSLVSLALNIIEL. At 229-382 the chain is on the cytoplasmic side; it reads FYVFFKGVKD…SRPRPDDLEI (154 aa). Lysine 237 participates in a covalent cross-link: Glycyl lysine isopeptide (Lys-Gly) (interchain with G-Cter in SUMO). Residues 244–382 are interaction with NOV; sequence SDPYHATSGA…SRPRPDDLEI (139 aa). At tyrosine 247 the chain carries Phosphotyrosine. A phosphoserine mark is found at serine 255 and serine 262. Positions 264–382 are interaction with UBQLN4; it reads KYAYFNGCSS…SRPRPDDLEI (119 aa). Cysteine 271 carries the S-nitrosocysteine modification. Threonine 275 is modified (phosphothreonine). The disordered stretch occupies residues 279-300; sequence SPMSPPGYKPVTGDRNNSSCRN. Serine 306 and serine 314 each carry phosphoserine. Positions 317 to 332 are enriched in polar residues; that stretch reads QNRMGQAGSTISNSHA. The tract at residues 317–382 is disordered; it reads QNRMGQAGST…SRPRPDDLEI (66 aa). A Phosphoserine; by CK1 modification is found at serine 325. Threonine 326 is subject to Phosphothreonine. Phosphoserine; by CK1 is present on residues serine 328 and serine 330. 2 positions are modified to phosphoserine: serine 344 and serine 365. Over residues 362–374 the composition is skewed to low complexity; it reads RPSSRASSRASSR. Residue serine 368 is modified to Phosphoserine; by PKC/PRKCG and PKC/PRKCD. A phosphoserine mark is found at serine 369 and serine 373.

Belongs to the connexin family. Alpha-type (group II) subfamily. As to quaternary structure, a connexon is composed of a hexamer of connexins. Interacts with SGSM3. Interacts with RIC1/CIP150. Interacts with CNST and CSNK1D. Interacts (via C-terminus) with TJP1. Interacts (via C-terminus) with SRC (via SH3 domain). Interacts (not ubiquitinated) with UBQLN4 (via UBA domain). Interacts with NOV. Interacts with TMEM65. Interacts with ANK3/ANKG and PKP2. Phosphorylation at Ser-325, Ser-328 and Ser-330 by CK1 modulates gap junction assembly. Phosphorylated at Ser-368 by PRKCG; phosphorylation induces disassembly of gap junction plaques and inhibition of gap junction activity. Phosphorylation at Ser-368 by PRKCD triggers its internalization into small vesicles leading to proteasome-mediated degradation. In terms of processing, sumoylated with SUMO1, SUMO2 and SUMO3, which may regulate the level of functional Cx43 gap junctions at the plasma membrane. May be desumoylated by SENP1 or SENP2. Post-translationally, S-nitrosylation at Cys-271 is enriched at the muscle endothelial gap junction in arteries, it augments channel permeability and may regulate of smooth muscle cell to endothelial cell communication. Acetylated in the developing cortex; leading to delocalization from the cell membrane.

It is found in the cell membrane. The protein localises to the cell junction. It localises to the gap junction. The protein resides in the endoplasmic reticulum. Its function is as follows. Gap junction protein that acts as a regulator of bladder capacity. A gap junction consists of a cluster of closely packed pairs of transmembrane channels, the connexons, through which materials of low MW diffuse from one cell to a neighboring cell. May play a critical role in the physiology of hearing by participating in the recycling of potassium to the cochlear endolymph. Negative regulator of bladder functional capacity: acts by enhancing intercellular electrical and chemical transmission, thus sensitizing bladder muscles to cholinergic neural stimuli and causing them to contract. May play a role in cell growth inhibition through the regulation of NOV expression and localization. Plays an essential role in gap junction communication in the ventricles. The sequence is that of Gap junction alpha-1 protein (GJA1) from Macaca fascicularis (Crab-eating macaque).